A 109-amino-acid polypeptide reads, in one-letter code: UPF0122 protein CLL_A1244 (109 aa).

This sequence belongs to the UPF0122 family.

Might take part in the signal recognition particle (SRP) pathway. This is inferred from the conservation of its genetic proximity to ftsY/ffh. May be a regulatory protein. This chain is UPF0122 protein CLL_A1244, found in Clostridium botulinum (strain Eklund 17B / Type B).